Here is a 313-residue protein sequence, read N- to C-terminus: Extracellular metalloprotease (313 aa).

An N-terminal signal peptide occupies residues 1 to 34 (MKLVPRFRKQWFAYLTVLCLALAAAVSFGVPAKA). The disordered stretch occupies residues 35 to 74 (AENPQTSVSNTGKEADATKNQTSKADQVSAPYEGTGKTSK). The propeptide occupies 35–93 (AENPQTSVSNTGKEADATKNQTSKADQVSAPYEGTGKTSKSLYGGQTELEKNIQTLQPS). Positions 37-60 (NPQTSVSNTGKEADATKNQTSKAD) are enriched in polar residues. The cysteines at positions 131 and 147 are disulfide-linked. Residues His146 and Ser267 each act as charge relay system in the active site.

The protein belongs to the peptidase S1B family. In terms of assembly, monomer.

The protein resides in the secreted. The sequence is that of Extracellular metalloprotease (mpr) from Bacillus subtilis (strain 168).